The following is a 505-amino-acid chain: One cut domain family member 2 (505 aa).

3 disordered regions span residues 29 to 94 (LGTL…GTAA), 165 to 190 (KFHHPHPHHHPHHHHHHHHHHQRLSG), and 275 to 333 (EQHL…QLEE). Over residues 35–56 (PVGGGSGGGGGGGGGGGGGGPG) the composition is skewed to gly residues. Residues 167-187 (HHPHPHHHPHHHHHHHHHHQR) are compositionally biased toward basic residues. The segment at residues 325–411 (VATSGQLEEI…QRMSALRLAA (87 aa)) is a DNA-binding region (CUT). A DNA-binding region (homeobox) is located at residues 427–486 (QKKSRLVFTDLQRRTLFAIFKENKRPSKEMQITISQQLGLELTTVSNFFMNARRRSLEKW).

The protein belongs to the CUT homeobox family.

The protein resides in the nucleus. Its function is as follows. Transcriptional activator. Activates the transcription of a number of liver genes such as HNF3B. The protein is One cut domain family member 2 (Onecut2) of Mus musculus (Mouse).